The sequence spans 59 residues: MAVQQNKKSPSKRGMHRAHDFLTAPVIAIEPSTGEAHRRHHISPNGFYRGRKVVKGKDE.

Positions M1–E59 are disordered. A compositionally biased stretch (basic residues) spans R49 to E59.

It belongs to the bacterial ribosomal protein bL32 family.

This Laribacter hongkongensis (strain HLHK9) protein is Large ribosomal subunit protein bL32.